We begin with the raw amino-acid sequence, 167 residues long: 3-isopropylmalate dehydratase small subunit (167 aa).

This sequence belongs to the LeuD family. LeuD type 2 subfamily. As to quaternary structure, heterodimer of LeuC and LeuD.

It carries out the reaction (2R,3S)-3-isopropylmalate = (2S)-2-isopropylmalate. It functions in the pathway amino-acid biosynthesis; L-leucine biosynthesis; L-leucine from 3-methyl-2-oxobutanoate: step 2/4. In terms of biological role, catalyzes the isomerization between 2-isopropylmalate and 3-isopropylmalate, via the formation of 2-isopropylmaleate. The polypeptide is 3-isopropylmalate dehydratase small subunit (Oleidesulfovibrio alaskensis (strain ATCC BAA-1058 / DSM 17464 / G20) (Desulfovibrio alaskensis)).